We begin with the raw amino-acid sequence, 117 residues long: MKMYKLMLGLVLAGLVSLSAQAIEQRDYHKEVIGKDCKSCHDQGVKNYPSDQACLQCHDVDELAEETARSEEDKWQNPHNNLHYGKELPCIECHGEHEAKKPICSNCHTFKYDKHKE.

Residues 1–22 form the signal peptide; the sequence is MKMYKLMLGLVLAGLVSLSAQA. His-29, Cys-37, Cys-40, His-41, Cys-54, Cys-57, His-58, His-79, His-83, Cys-90, Cys-93, His-94, His-97, Cys-104, Cys-107, and His-108 together coordinate heme c.

The ArdAB flavocytochrome c is composed of a FAD-containing subunit (ArdA) and a heme c-containing subunit (ArdB). It depends on heme c as a cofactor.

It localises to the periplasm. With respect to regulation, methacrylate acts as a competitive inhibitor of the acrylate reductase activity and suppresses the reductase activity in dose-dependent manner. Heme c-containing subunit of the ArdAB flavocytochrome c, which catalyzes the reduction of acrylate to propanoate and supports dimethylsulfoniopropionate-dependent anaerobic respiration. In vitro, can use the artificial electron donor methyl viologen. The natural electron donor is probably a low-potential cytochrome c. Also shows weak activity toward methacrylate in vitro (at a 22-fold lower rate) but cannot use other tested 2-enoates, including crotonic, fumaric, sorbic, urocanic, cinnamic, p-coumaric, caffeic or ferulic acids. The protein catalyzes a unidirectional reaction and cannot oxidize propanoate with phenazine metasulfate and dichlorophenolindophenol as electron acceptors. The protein is Acrylate reductase cytochrome subunit of Shewanella woodyi (strain ATCC 51908 / MS32).